The sequence spans 158 residues: Cyclic pyranopterin monophosphate synthase (158 aa).

Substrate is bound by residues 76-78 (MCH) and 114-115 (ME). Asp-129 is an active-site residue.

The protein belongs to the MoaC family. As to quaternary structure, homohexamer; trimer of dimers.

The catalysed reaction is (8S)-3',8-cyclo-7,8-dihydroguanosine 5'-triphosphate = cyclic pyranopterin phosphate + diphosphate. Its pathway is cofactor biosynthesis; molybdopterin biosynthesis. In terms of biological role, catalyzes the conversion of (8S)-3',8-cyclo-7,8-dihydroguanosine 5'-triphosphate to cyclic pyranopterin monophosphate (cPMP). This chain is Cyclic pyranopterin monophosphate synthase, found in Clostridium perfringens (strain 13 / Type A).